Here is a 1115-residue protein sequence, read N- to C-terminus: MAGAGGGLGVWGNLVLLGLCSWTGARAPAPNPGRNLTVETQTTSSISLSWEVPDGLDSQNSNYWVQCTGDGGTTETRNTTATNVTVDGLGPGSLYTCSVWVEKDGVNSSVGTVTTATAPNPVRNLRVEAQTNSSIALTWEVPDGPDPQNSTYGVEYTGDGGRAGTRSTAHTNITVDGLEPGCLYAFSMWVGKNGINSSRETRNATTAHNPVRNLRVEAQTTSSISLSWEVPDGTDPQNSTYCVQCTGDGGRTETRNTTDTRVTVDGLGPGSLYTCSVWVEKDGVNSSVEIVTSATAPNPVRNLTVEAQTNSSIALTWEVPDGPDPQNSTYGVEYTGDGGRAGTRSTAHTNITVDRLEPGCLYVFSVWVGKNGINSSRETRNATTAPNPVRNLHMETQTNSSIALCWEVPDGPYPQDYTYWVEYTGDGGGTETRNTTNTSVTAERLEPGTLYTFSVWAEKNGARGSRQNVSISTVPNAVTSLSKQDWTNSTIALRWTAPQGPGQSSYSYWVSWVREGMTDPRTQSTSGTDITLKELEAGSLYHLTVWAERNEVRGYNSTLTAATAPNEVTDLQNETQTKNSVMLWWKAPGDPHSQLYVYWVQWASKGHPRRGQDPQANWVNQTSRTNETWYKVEALEPGTLYNFTVWAERNDVASSTQSLCASTYPDTVTITSCVSTSAGYGVNLIWSCPQGGYEAFELEVGGQRGSQDRSSCGEAVSVLGLGPARSYPATITTIWDGMKVVSHSVVCHTESAGVIAGAFVGILLFLILVGLLIFFLKRRNKKKQQKPELRDLVFSSPGDIPAEDFADHVRKNERDSNCGFADEYQQLSLVGHSQSQMVASASENNAKNRYRNVLPYDWSRVPLKPIHEEPGSDYINASFMPGLWSPQEFIATQGPLPQTVGDFWRLVWEQQSHTLVMLTNCMEAGRVKCEHYWPLDSQPCTHGHLRVTLVGEEVMENWTVRELLLLQVEEQKTLSVRQFHYQAWPDHGVPSSPDTLLAFWRMLRQWLDQTMEGGPPIVHCSAGVGRTGTLIALDVLLRQLQSEGLLGPFSFVRKMRESRPLMVQTEAQYVFLHQCILRFLQQSAQAPAEKEVPYEDVENLIYENVAAIQAHKLEV.

Positions 1–27 (MAGAGGGLGVWGNLVLLGLCSWTGARA) are cleaved as a signal peptide. Residues 28-754 (PAPNPGRNLT…VVCHTESAGV (727 aa)) are Extracellular-facing. Fibronectin type-III domains are found at residues 32 to 121 (PGRN…APNP), 122 to 209 (VRNL…TAHN), 210 to 299 (PVRN…APNP), 300 to 387 (VRNL…TAPN), 388 to 477 (PVRN…VPNA), 478 to 563 (VTSL…TAAT), 564 to 666 (APNE…TYPD), and 665 to 749 (PDTV…VCHT). N-linked (GlcNAc...) asparagine glycosylation is found at Asn35, Asn83, Asn172, Asn256, Asn285, Asn350, Asn434, Asn468, Asn556, and Asn642. Residues 755 to 775 (IAGAFVGILLFLILVGLLIFF) traverse the membrane as a helical segment. Residues 776-1115 (LKRRNKKKQQ…AAIQAHKLEV (340 aa)) are Cytoplasmic-facing. The 260-residue stretch at 820–1079 (FADEYQQLSL…VFLHQCILRF (260 aa)) folds into the Tyrosine-protein phosphatase domain. The active-site Phosphocysteine intermediate is Cys1020. Residues Tyr1094 and Tyr1102 each carry the phosphotyrosine modification.

This sequence belongs to the protein-tyrosine phosphatase family. Receptor class 3 subfamily. As to quaternary structure, homodimer; disulfide-linked. Interacts with LCK. Interacts (phosphorylated form) with GRB2 (via SH2 domain). Interacts (phosphorylated form) with FYN (via SH2 domain). Interacts (via extracellular domain) with CEACAM20 (via extracellular domain); the interaction dephosphorylates CEACAM20. Expressed at high levels in the brain, spleen and liver and at lower levels in the heart and stomach. Expressed in pancreatic and colorectal cancer cells, but not in normal pancreas or colon. Expression in hepatocellular carcinoma is related to the differentiation status of the tumor and expression is inversely related to tumor aggressiveness.

The protein resides in the cell projection. Its subcellular location is the microvillus membrane. It localises to the apical cell membrane. It is found in the cytoplasm. It carries out the reaction O-phospho-L-tyrosyl-[protein] + H2O = L-tyrosyl-[protein] + phosphate. With respect to regulation, regulated by reversible dimerization. Dimerization reduces its catalytic activity. Protein phosphatase that may contribute to contact inhibition of cell growth and motility by mediating the dephosphorylation of focal adhesion-associated substrates and thus negatively regulating integrin-promoted signaling processes. Induces apoptotic cell death by at least two distinct mechanisms: inhibition of cell survival signaling mediated by PI 3-kinase, Akt, and ILK and activation of a caspase-dependent proapoptotic pathway. Inhibits the basal activity of LCK and its activation in response to TCR stimulation and TCR-induced activation of MAP kinase and surface expression of CD69. Inhibits TCR-induced tyrosine phosphorylation of LAT and ZAP70. Inhibits both basal activity of DOK1 and its CD2-induced tyrosine phosphorylation. Induces dephosphorylation of BCAR1, focal adhesion kinase and SRC. Reduces migratory activity of activity of Jurkat cells. Reduces tyrosine phosphorylation of CEACAM20 and thereby contributes to suppress the intestinal immune response CEACAM20. This Homo sapiens (Human) protein is Receptor-type tyrosine-protein phosphatase H (PTPRH).